The chain runs to 744 residues: TonB-dependent heme receptor A (744 aa).

The first 24 residues, 1 to 24 (MNILINKRIFLLVTLVGIQLNVTA), serve as a signal peptide directing secretion. Positions 45 to 157 (DDSNKLPGRS…FAGTVKFETK (113 aa)) constitute a TBDR plug domain. The TBDR beta-barrel domain maps to 168 to 744 (KIGGFLKYGN…NIKFSLSQKF (577 aa)).

Belongs to the TonB-dependent receptor family.

It localises to the cell outer membrane. In terms of biological role, heme receptor. In Haemophilus influenzae (strain ATCC 51907 / DSM 11121 / KW20 / Rd), this protein is TonB-dependent heme receptor A (tdhA).